Here is a 450-residue protein sequence, read N- to C-terminus: Glutathione reductase (450 aa).

FAD contacts are provided by serine 14, glycine 15, glutamate 34, threonine 41, cysteine 42, and lysine 50. Serine 14 lines the glutathione pocket. A disulfide bridge connects residues cysteine 42 and cysteine 47. Tyrosine 99 serves as a coordination point for glutathione. Alanine 115 provides a ligand contact to FAD. Residues alanine 175, isoleucine 178, glutamate 181, arginine 198, arginine 204, and glycine 262 each coordinate NADP(+). Residue aspartate 303 coordinates FAD. Glutamate 309 serves as a coordination point for NADP(+). An FAD-binding site is contributed by threonine 311. Arginine 319 is a binding site for glutathione. Valine 342 contributes to the NADP(+) binding site. Histidine 439 provides a ligand contact to FAD. The active-site Proton acceptor is histidine 439.

The protein belongs to the class-I pyridine nucleotide-disulfide oxidoreductase family. In terms of assembly, homodimer. It depends on FAD as a cofactor.

The protein localises to the cytoplasm. It carries out the reaction 2 glutathione + NADP(+) = glutathione disulfide + NADPH + H(+). Catalyzes the reduction of glutathione disulfide (GSSG) to reduced glutathione (GSH). Constitutes the major mechanism to maintain a high GSH:GSSG ratio in the cytosol. The protein is Glutathione reductase (gor) of Escherichia coli (strain K12).